The sequence spans 403 residues: GPI-N-acetylgalactosamine transferase PGAP4 (403 aa).

At 1–22 (MSTSTSPAAMLLRRLRRLSWGS) the chain is on the cytoplasmic side. Residues 23–43 (TAVQLFILTVVTFGLLAPLAC) form a helical membrane-spanning segment. Over 44–259 (HRLLHSYFYL…RLQHYINPEP (216 aa)) the chain is Lumenal. N87 carries N-linked (GalNAc...) asparagine glycosylation. V109 is a binding site for UDP-N-acetyl-alpha-D-galactosamine. Cystine bridges form between C132-C136 and C144-C194. The short motif at 211 to 213 (EDD) is the DXD motif element. A helical transmembrane segment spans residues 260 to 280 (MRILEWVGVGMLLGPLLTWIY). Residues 281–287 (MRFASRP) lie on the Cytoplasmic side of the membrane. The chain crosses the membrane as a helical span at residues 288 to 308 (GFSWPVMLFFSLYSMGLVELV). Residues 309 to 403 (GRHYFLELRR…LRYNFHPSLL (95 aa)) lie on the Lumenal side of the membrane. A disulfide bridge links C332 with C333. Positions 334, 335, and 362 each coordinate UDP-N-acetyl-alpha-D-galactosamine.

Belongs to the PGAP4 family. Glycosylated.

Its subcellular location is the golgi apparatus membrane. Functionally, golgi-resident glycosylphosphatidylinositol (GPI)-N-acetylgalactosamine transferase that catalyzes the N-acetyl-beta-D-galactosamine transfer from an UDP-N-acetyl-alpha-D-galactosamine to the 4-OH-position of the first mannose of the glycosylphosphatidylinositol (GPI) of a GPI-anchored protein (GPI-AP). This modification occurs after the fatty acid remodeling step of the GPI-anchor maturation. The chain is GPI-N-acetylgalactosamine transferase PGAP4 from Homo sapiens (Human).